Consider the following 344-residue polypeptide: MEKVAVLGAGSWGTALAIVLADNGHEVRLWSHRKEHAETINETHRNHKYLDVDIPNEITAYSDMHQTVSGVDAVVIVVPTKAIREVCSELNKWMDSKTTVIHATKGIEPVSLKRVSEMIEEEMDIKYEDIVVLSGPSHAEEVALRHPTTVTTSSINLEKAKHAQDLFSSDSFRVYTSDDILGIELGGALKNIIALGAGISDGLGFGDNAKAALITRGLAEIARLGTSLGANPLSFLGLSGVGDLIVTCTSVHSRNWRAGNLLGKGNQLEDVLEQMGMVVEGVRTVKAAHQFAKDQNVDMPITSGIFQILFENKNPKDVVEQLMNRGKRDEMDDLAVLLKERYSE.

Residues Ser-11, Trp-12, His-32, Arg-33, and Lys-105 each contribute to the NADPH site. Positions 105, 135, and 137 each coordinate sn-glycerol 3-phosphate. Ala-139 provides a ligand contact to NADPH. Residues Lys-190, Asp-243, Ser-253, Arg-254, and Asn-255 each coordinate sn-glycerol 3-phosphate. The active-site Proton acceptor is the Lys-190. Arg-254 serves as a coordination point for NADPH. Val-278 and Glu-280 together coordinate NADPH.

Belongs to the NAD-dependent glycerol-3-phosphate dehydrogenase family.

It is found in the cytoplasm. The catalysed reaction is sn-glycerol 3-phosphate + NAD(+) = dihydroxyacetone phosphate + NADH + H(+). It carries out the reaction sn-glycerol 3-phosphate + NADP(+) = dihydroxyacetone phosphate + NADPH + H(+). Its pathway is membrane lipid metabolism; glycerophospholipid metabolism. Functionally, catalyzes the reduction of the glycolytic intermediate dihydroxyacetone phosphate (DHAP) to sn-glycerol 3-phosphate (G3P), the key precursor for phospholipid synthesis. The polypeptide is Glycerol-3-phosphate dehydrogenase [NAD(P)+] (Oceanobacillus iheyensis (strain DSM 14371 / CIP 107618 / JCM 11309 / KCTC 3954 / HTE831)).